A 550-amino-acid chain; its full sequence is Membrane-bound alkaline phosphatase (550 aa).

Residues 1–39 (MSTWWLVVVAAAAAAGLVRAEDRYHPERLAAGEASAATR) form the signal peptide. Residue Asp83 participates in Mg(2+) binding. Zn(2+) is bound at residue Asp83. The Phosphoserine intermediate role is filled by Ser133. 3 residues coordinate Mg(2+): His196, Ser198, and Glu356. Positions 361, 365, 402, 403, and 479 each coordinate Zn(2+). Ser524 is lipidated: GPI-anchor amidated serine. The propeptide at 525 to 550 (AATVPTAALLSLLLAAFITLRHQCFL) is removed in mature form.

The protein belongs to the alkaline phosphatase family. It depends on Mg(2+) as a cofactor. Zn(2+) is required as a cofactor. Midgut.

Its subcellular location is the cell membrane. The catalysed reaction is a phosphate monoester + H2O = an alcohol + phosphate. This chain is Membrane-bound alkaline phosphatase (Alp-m), found in Bombyx mori (Silk moth).